Consider the following 298-residue polypeptide: Syntaxin-125 (298 aa).

The residue at position 1 (Met-1) is an N-acetylmethionine. The Cytoplasmic portion of the chain corresponds to 1 to 274; that stretch reads MNDLFSNSFK…KSSRKWTCYA (274 aa). Residues 25–155 adopt a coiled-coil conformation; that stretch reads TMNLDKFFED…NEYKETVERR (131 aa). In terms of domain architecture, t-SNARE coiled-coil homology spans 198 to 260; it reads ISEIQERHDA…RRGTDQLQDA (63 aa). Residues 275-295 form a helical; Anchor for type IV membrane protein membrane-spanning segment; that stretch reads IILFIVIFILLLIPLLPHIML. Residues 296 to 298 lie on the Vesicular side of the membrane; the sequence is MLK.

This sequence belongs to the syntaxin family. In terms of assembly, part of the t-SNARE complex.

Its subcellular location is the membrane. Vesicle trafficking protein that functions in the secretory pathway. This Arabidopsis thaliana (Mouse-ear cress) protein is Syntaxin-125 (SYP125).